The sequence spans 160 residues: Cyclic pyranopterin monophosphate synthase (160 aa).

Residues 73–75 (LCH) and 110–111 (ME) each bind substrate. The active site involves Asp-125.

The protein belongs to the MoaC family. Homohexamer; trimer of dimers.

The enzyme catalyses (8S)-3',8-cyclo-7,8-dihydroguanosine 5'-triphosphate = cyclic pyranopterin phosphate + diphosphate. Its pathway is cofactor biosynthesis; molybdopterin biosynthesis. Functionally, catalyzes the conversion of (8S)-3',8-cyclo-7,8-dihydroguanosine 5'-triphosphate to cyclic pyranopterin monophosphate (cPMP). The protein is Cyclic pyranopterin monophosphate synthase of Pseudomonas paraeruginosa (strain DSM 24068 / PA7) (Pseudomonas aeruginosa (strain PA7)).